The sequence spans 7913 residues: Nonribosomal peptide synthetase dtxS1 (7913 aa).

The segment at 263–662 (FEQRSRAHPN…GRNDNQVKIR (400 aa)) is adenylation 1. A Carrier 1 domain is found at 789-865 (QPLSEVEKQV…NVAGQARRTT (77 aa)). Ser-826 is subject to O-(pantetheine 4'-phosphoryl)serine. Residues 903–1171 (QDAFPCTSLQ…ITTVPVRIRL (269 aa)) are condensation 1. Residues 1332-1740 (LETQAHSRPD…GRKDAQVKIR (409 aa)) are adenylation 2. The Carrier 2 domain maps to 1865–1941 (QPRTKLERQL…NLAQATGTQG (77 aa)). Ser-1902 is modified (O-(pantetheine 4'-phosphoryl)serine). Residues 1965 to 2249 (PAQLSPIQRL…FSTIFPVRVS (285 aa)) are condensation 2. Residues 2863 to 3255 (LAQPHEPAIC…ARKDAQIKIR (393 aa)) are adenylation 3. In terms of domain architecture, Carrier 3 spans 3380-3456 (QPLSEAERKM…NVTHQAVAQL (77 aa)). Position 3417 is an O-(pantetheine 4'-phosphoryl)serine (Ser-3417). Residues 3496-3761 (DAFPCTPLQE…FATLPLRVRL (266 aa)) are condensation 3. The tract at residues 3924 to 4321 (DRVRIHPNAP…GRKDDQVKLR (398 aa)) is adenylation 4. A compositionally biased stretch (polar residues) spans 4439–4450 (ELAQARTAQQGP). The segment at 4439–4459 (ELAQARTAQQGPKRQPASEAE) is disordered. Positions 4453–4529 (QPASEAERQM…EAATQAQMLG (77 aa)) constitute a Carrier 4 domain. At Ser-4490 the chain carries O-(pantetheine 4'-phosphoryl)serine. The tract at residues 4545–4837 (QSFAQARLWF…VNMQCLRVKI (293 aa)) is condensation 4. The interval 5006 to 5405 (FRQQVAACAD…RRMDAQVKIR (400 aa)) is adenylation 5. In terms of domain architecture, Carrier 5 spans 5933 to 6009 (QPTSKTQRQL…DMAEGLPLAK (77 aa)). O-(pantetheine 4'-phosphoryl)serine is present on Ser-5970. A condensation 5 region spans residues 6023–6315 (VEQSFAQRRL…VNMQCIRIRV (293 aa)). An adenylation 6 region spans residues 6481-6766 (FRQQALLNPD…IINAYGPTEN (286 aa)). Residues 7394 to 7470 (QPTTDMEREM…DLACHLSPEE (77 aa)) form the Carrier 6 domain. O-(pantetheine 4'-phosphoryl)serine is present on Ser-7431. The condensation 6 stretch occupies residues 7501-7771 (EDVLPLTSFQ…CLNIVPIRVN (271 aa)).

The protein belongs to the NRP synthetase family.

It functions in the pathway secondary metabolite biosynthesis. In terms of biological role, nonribosomal peptide synthetase; part of the gene cluster that mediates the biosynthesis of destruxins, insecticidal cyclic hexadepsipeptides which induce flaccid paralysis and visceral muscle contraction in insects through targeting the calcium channels and vacuolar-type ATPases. The aldo-keto reductase dtxS3 converts alpha-ketoisocaproic acid from deaminated leucine into alpha-hydroxyisocaproic acid (HIC), which is the first substrate for destruxin assembly by dtxS1. L-aspartate decarboxylase dtxS4 converts aspartic acid into beta-alanine, the last substrate for the destruxin assembly line performed by dtxS1. The nonribosomal peptide synthetase dtxS1 synthesizes destruxins B and B2, whereas the cytochrome P450 monooxygenase dtxS2 is required to convert destruxin B into other destruxin derivatives, including destructins C, D, A and E. Destruxin E-diol (ED) is further produced in a non-enzymatic manner from destruxin E. Destruxins play an important role in virulence and escape from insect host immune defenses. This is Nonribosomal peptide synthetase dtxS1 from Metarhizium robertsii (strain ARSEF 23 / ATCC MYA-3075) (Metarhizium anisopliae (strain ARSEF 23)).